The sequence spans 210 residues: Ribosomal RNA small subunit methyltransferase G (210 aa).

Residues Gly-76, Met-81, 127–128 (VE), and Arg-145 contribute to the S-adenosyl-L-methionine site.

The protein belongs to the methyltransferase superfamily. RNA methyltransferase RsmG family.

The protein localises to the cytoplasm. It catalyses the reaction guanosine(527) in 16S rRNA + S-adenosyl-L-methionine = N(7)-methylguanosine(527) in 16S rRNA + S-adenosyl-L-homocysteine. Functionally, specifically methylates the N7 position of guanine in position 527 of 16S rRNA. In Acinetobacter baumannii (strain SDF), this protein is Ribosomal RNA small subunit methyltransferase G.